The chain runs to 519 residues: Protein twist (519 aa).

4 disordered regions span residues 53 to 77 (MQQQ…QQQY), 131 to 156 (NFEQ…VATA), 301 to 321 (YEAY…SDRD), and 368 to 389 (FRKP…DEFS). Low complexity-rich tracts occupy residues 54 to 76 (QQQQ…QQQQ) and 134 to 146 (QQQQ…QQQQ). Positions 308 to 317 (NSLNGSTYSS) are enriched in polar residues. Residues 368–379 (FRKPRRRLKRKP) show a composition bias toward basic residues. One can recognise a bHLH domain in the interval 390–441 (NQRVMANVRERQRTQSLNDAFKALQQIIPTLPSDKLSKIQTLKLATRYIDFL).

In terms of assembly, efficient DNA binding requires dimerization with another bHLH protein. Homodimer.

Its subcellular location is the nucleus. Its function is as follows. Involved in the establishment and dorsoventral patterning of germ layers in the embryo. This is Protein twist from Drosophila virilis (Fruit fly).